The chain runs to 158 residues: Complexin-3 (158 aa).

The segment at 14-47 is disordered; it reads KNLTGSLGGGEDKGDGDKSAAEAQGMSREEYEEY. Positions 23-33 are enriched in basic and acidic residues; that stretch reads GEDKGDGDKSA. A coiled-coil region spans residues 39–74; sequence MSREEYEEYQKQLVEEKMERDAQFTQRKAERATLRS. Position 155 is a cysteine methyl ester (C155). A lipid anchor (S-farnesyl cysteine) is attached at C155. Positions 156–158 are cleaved as a propeptide — removed in mature form; it reads HIM.

This sequence belongs to the complexin/synaphin family. As to quaternary structure, binds to the SNARE core complex containing SNAP25, VAMP2 and STX1A. Post-translationally, farnesylation mediates presynaptic targeting. Present in many brain regions, including hippocampus and cerebellum (at protein level). Expressed in the retina (at protein level). Expressed in retinal amacrine cells (at protein level). Expressed in retinal photoreceptor ribbon synapses. Expressed in the retinal inner nuclear layer, at bipolar cells (at protein level). Expressed in cone photoreceptor synaptic terminals (at protein level).

Its subcellular location is the synapse. The protein resides in the cell membrane. Complexin that regulates SNARE protein complex-mediated synaptic vesicle fusion. Required for the maintenance of synaptic ultrastructure in the adult retina. Positively regulates synaptic transmission through synaptic vesicle availability and exocytosis of neurotransmitters at photoreceptor ribbon synapses in the retina. Suppresses tonic photoreceptor activity and baseline 'noise' by suppression of Ca(2+) vesicle tonic release and the facilitation of evoked synchronous and asynchronous Ca(2+) vesicle release. This chain is Complexin-3 (Cplx3), found in Mus musculus (Mouse).